We begin with the raw amino-acid sequence, 289 residues long: ATP synthase gamma chain (289 aa).

Belongs to the ATPase gamma chain family. As to quaternary structure, F-type ATPases have 2 components, CF(1) - the catalytic core - and CF(0) - the membrane proton channel. CF(1) has five subunits: alpha(3), beta(3), gamma(1), delta(1), epsilon(1). CF(0) has three main subunits: a, b and c.

It is found in the cell inner membrane. In terms of biological role, produces ATP from ADP in the presence of a proton gradient across the membrane. The gamma chain is believed to be important in regulating ATPase activity and the flow of protons through the CF(0) complex. The polypeptide is ATP synthase gamma chain (Histophilus somni (strain 129Pt) (Haemophilus somnus)).